The following is a 1260-amino-acid chain: uncharacterized protein (1260 aa).

Belongs to the oxoprolinase family.

This is an uncharacterized protein from Schizosaccharomyces pombe (strain 972 / ATCC 24843) (Fission yeast).